The following is a 525-amino-acid chain: uncharacterized protein (525 aa).

The first 21 residues, 1 to 21, serve as a signal peptide directing secretion; it reads MLECLSALLVLFAGGGGSVLA. Topologically, residues 22–448 are extracellular; the sequence is AVQSKTVADP…ISAASQLDKR (427 aa). The disordered stretch occupies residues 242–264; the sequence is KVSSENCSKDTDDKSGSKKERNT. The helical transmembrane segment at 449-469 threads the bilayer; that stretch reads IFIFTAITVSITTLMMLGFSY. The Cytoplasmic segment spans residues 470–525; that stretch reads RSRVSFRDHSIDDSDDDNDWSDDEVEFDEEYFYSLPVSIPEKGISLDKMAQQLGVE.

It localises to the membrane. This is an uncharacterized protein from Saccharomyces cerevisiae (strain YJM789) (Baker's yeast).